The chain runs to 913 residues: Cadherin-4 (913 aa).

A signal peptide spans 1–20 (MTTGSVLPLLLLGLSGALRA). The propeptide occupies 21–166 (HREDLTVREA…SSGGLRRQKR (146 aa)). N-linked (GlcNAc...) asparagine glycosylation occurs at asparagine 146. 5 Cadherin domains span residues 167–274 (DWVI…RPEF), 275–389 (INQV…PPEF), 390–504 (TTST…APYF), 505–610 (PSNH…DNAP), and 611–721 (QLLP…TVGA). The Extracellular segment spans residues 167 to 731 (DWVIPPINVP…VAAAGLGTGA (565 aa)). Asparagine 280, asparagine 409, asparagine 554, asparagine 629, asparagine 658, and asparagine 699 each carry an N-linked (GlcNAc...) asparagine glycan. A helical transmembrane segment spans residues 732–753 (IVAILICIVILLIMVLLFVVWM). At 754–913 (KRREKERHTK…ADMYGGGEED (160 aa)) the chain is on the cytoplasmic side.

In terms of tissue distribution, distributed widely in mouse tissues with high levels present in brain, skeletal muscle and thymus.

It is found in the cell membrane. Cadherins are calcium-dependent cell adhesion proteins. They preferentially interact with themselves in a homophilic manner in connecting cells; cadherins may thus contribute to the sorting of heterogeneous cell types. May play an important role in retinal development. The protein is Cadherin-4 (Cdh4) of Mus musculus (Mouse).